Consider the following 348-residue polypeptide: Putative 4-hydroxythreonine-4-phosphate dehydrogenase 2 (348 aa).

A divalent metal cation-binding residues include His-180, His-224, and His-279.

It belongs to the PdxA family. In terms of assembly, homodimer. Zn(2+) is required as a cofactor. Requires Mg(2+) as cofactor. Co(2+) serves as cofactor.

It is found in the cytoplasm. It carries out the reaction 4-(phosphooxy)-L-threonine + NAD(+) = 3-amino-2-oxopropyl phosphate + CO2 + NADH. It participates in cofactor biosynthesis; pyridoxine 5'-phosphate biosynthesis; pyridoxine 5'-phosphate from D-erythrose 4-phosphate: step 4/5. Catalyzes the NAD(P)-dependent oxidation of 4-(phosphooxy)-L-threonine (HTP) into 2-amino-3-oxo-4-(phosphooxy)butyric acid which spontaneously decarboxylates to form 3-amino-2-oxopropyl phosphate (AHAP). This Rhizobium meliloti (strain 1021) (Ensifer meliloti) protein is Putative 4-hydroxythreonine-4-phosphate dehydrogenase 2.